We begin with the raw amino-acid sequence, 555 residues long: MAEKDKYRPLANFPSTAWGCSFASFSSSNSDFELYTREVETLKEKVRPMVTASTKDPLENVQIINLLYRLGVSYHFENEITDQLNHIFEIIPNHIISDDNDYDLYTVAILFQILRQYGHKVPCDVFNKFKNSDGKFKKSIANDLKGLLSLYEASFLSVHGENILDEAIAFTRPLLESFADQSSPHLAKYIRNSLLRPHHQGIQRVEARQYISFYEEDESRNETLLKFAKLDFNRLQLLHKQELASLSRYKKYIAQIIIWEDLNLAKELPYIRDRLVETYLWAIGAHFEPQYALSRAIIAKYTTIVSAVDDTYDAYGTLDELQRFTNAFQRCDIDAIDELPDYMKVLYRALLNFFDQIEDEVDEGRSYSTSVAKEAFKELVRSYYVEAQWFSDGYVPSFDEYMRNGLITSTYTVLPAASFIGMENTVGEKEYKWVQSNPKIVKAAKIICRLMDDITTHEDEQKRGHCASSIECYMKEYGVSEKKAIEEIQKICANAWKDMNEECMKKPPTVSRTLLKYYVNLARVIDFVYKNLDSYTYASSLKGDITTVFLELLPV.

Residues aspartate 309, aspartate 313, and glutamate 460 each coordinate Mg(2+). The short motif at 309–313 is the DDXXD motif element; it reads DDTYD.

It belongs to the terpene synthase family. It depends on Mg(2+) as a cofactor.

Its function is as follows. Probable sesquiterpene synthase. This is Probable terpene synthase 6 (TPS6) from Ricinus communis (Castor bean).